The primary structure comprises 503 residues: Splicing factor 3A subunit 3 (503 aa).

Disordered stretches follow at residues 296–317 and 341–384; these read PALMAKKPSAKTASAQSREHER and ATKE…NPKN. The span at 358–377 shows a compositional bias: acidic residues; that stretch reads DDSDVEASESDNEDDPDADD. A phosphoserine mark is found at Ser-360, Ser-365, and Ser-367. A Matrin-type zinc finger spans residues 408–439; the sequence is YNCEICGNFTYKGPKAFQRHFAEWRHAHGMRC.

It belongs to the SF3A3 family. As to quaternary structure, probable component of a the U2 small nuclear ribonucleoproteins complex (U2 snRNP). As to expression, ubiquitous. In ovaries and testes, it is expressed in all germ and somatic cells. Highly expressed in spermatogonias and spermatocytes. Highly expressed in the germ cells of larval testes, while it is weakly expressed in fat body cells, in polyploid nuclei of salivary glands, and in larval brain.

The protein localises to the nucleus. Probable subunit of a splicing factor complex required for 'A' complex assembly formed by the stable binding of U2 snRNP to the branchpoint sequence (BPS) in pre-mRNA. Involved in male fertility. The protein is Splicing factor 3A subunit 3 (noi) of Drosophila melanogaster (Fruit fly).